We begin with the raw amino-acid sequence, 243 residues long: Ribonuclease HII (243 aa).

One can recognise an RNase H type-2 domain in the interval 23–217 (SVIVGVDEVG…LSSECEGAPP (195 aa)). Positions 29, 30, and 122 each coordinate a divalent metal cation. The segment at 223 to 243 (LSSTGIKTPVDGRGDAVATRD) is disordered. Residues 232–243 (VDGRGDAVATRD) are compositionally biased toward basic and acidic residues.

This sequence belongs to the RNase HII family. Requires Mn(2+) as cofactor. It depends on Mg(2+) as a cofactor.

Its subcellular location is the cytoplasm. It carries out the reaction Endonucleolytic cleavage to 5'-phosphomonoester.. Its function is as follows. Endonuclease that specifically degrades the RNA of RNA-DNA hybrids. In Anaplasma marginale (strain St. Maries), this protein is Ribonuclease HII.